The primary structure comprises 172 residues: Large ribosomal subunit protein uL10 (172 aa).

Belongs to the universal ribosomal protein uL10 family. As to quaternary structure, part of the ribosomal stalk of the 50S ribosomal subunit. The N-terminus interacts with L11 and the large rRNA to form the base of the stalk. The C-terminus forms an elongated spine to which L12 dimers bind in a sequential fashion forming a multimeric L10(L12)X complex.

Forms part of the ribosomal stalk, playing a central role in the interaction of the ribosome with GTP-bound translation factors. The polypeptide is Large ribosomal subunit protein uL10 (Rhodospirillum centenum (strain ATCC 51521 / SW)).